The following is a 372-amino-acid chain: Riboflavin biosynthesis protein RibD (372 aa).

Positions 1–122 constitute a CMP/dCMP-type deaminase domain; that stretch reads MKDIFYMKKA…KWLKKHGILV (122 aa). The interval 1 to 145 is deaminase; the sequence is MKDIFYMKKA…KGFFQRMTTG (145 aa). His-50 lines the Zn(2+) pocket. The active-site Proton donor is Glu-52. Zn(2+) contacts are provided by Cys-75 and Cys-84. The interval 146 to 372 is reductase; the sequence is IPWIKLKLAS…KLILTKHNSS (227 aa). Residue Ala-154 participates in NADP(+) binding. Ser-168 contacts substrate. Trp-170 is an NADP(+) binding site. Arg-184 lines the substrate pocket. NADP(+)-binding residues include Thr-196 and Asp-200. Positions 204 and 207 each coordinate substrate. Residue Ser-236 participates in NADP(+) binding. Substrate is bound at residue Glu-301. NADP(+) is bound at residue 303–309; it reads GPSLSSS.

It in the N-terminal section; belongs to the cytidine and deoxycytidylate deaminase family. In the C-terminal section; belongs to the HTP reductase family. Requires Zn(2+) as cofactor.

It carries out the reaction 2,5-diamino-6-hydroxy-4-(5-phosphoribosylamino)-pyrimidine + H2O + H(+) = 5-amino-6-(5-phospho-D-ribosylamino)uracil + NH4(+). It catalyses the reaction 5-amino-6-(5-phospho-D-ribitylamino)uracil + NADP(+) = 5-amino-6-(5-phospho-D-ribosylamino)uracil + NADPH + H(+). It participates in cofactor biosynthesis; riboflavin biosynthesis; 5-amino-6-(D-ribitylamino)uracil from GTP: step 2/4. The protein operates within cofactor biosynthesis; riboflavin biosynthesis; 5-amino-6-(D-ribitylamino)uracil from GTP: step 3/4. In terms of biological role, converts 2,5-diamino-6-(ribosylamino)-4(3h)-pyrimidinone 5'-phosphate into 5-amino-6-(ribosylamino)-2,4(1h,3h)-pyrimidinedione 5'-phosphate. This Buchnera aphidicola subsp. Baizongia pistaciae (strain Bp) protein is Riboflavin biosynthesis protein RibD (ribD).